Here is a 136-residue protein sequence, read N- to C-terminus: MPSERVAKILEELKALSLLEASELVKAIEETFGVSAAAPAGGMVMAAPVAAAAAAPAAAPEPVEEQTAFDVILEAVPADKKIAILKVVRELTGLGLKDAKDLVEAAPKPVKEGVAKEEANDIKKKLEEAGATVKIK.

Belongs to the bacterial ribosomal protein bL12 family. In terms of assembly, homodimer. Part of the ribosomal stalk of the 50S ribosomal subunit. Forms a multimeric L10(L12)X complex, where L10 forms an elongated spine to which 2 to 4 L12 dimers bind in a sequential fashion. Binds GTP-bound translation factors.

In terms of biological role, forms part of the ribosomal stalk which helps the ribosome interact with GTP-bound translation factors. Is thus essential for accurate translation. In Synechococcus sp. (strain JA-2-3B'a(2-13)) (Cyanobacteria bacterium Yellowstone B-Prime), this protein is Large ribosomal subunit protein bL12.